We begin with the raw amino-acid sequence, 327 residues long: Phenylalanine--tRNA ligase alpha subunit (327 aa).

Mg(2+) is bound at residue glutamate 252.

The protein belongs to the class-II aminoacyl-tRNA synthetase family. Phe-tRNA synthetase alpha subunit type 1 subfamily. Tetramer of two alpha and two beta subunits. Requires Mg(2+) as cofactor.

It is found in the cytoplasm. The catalysed reaction is tRNA(Phe) + L-phenylalanine + ATP = L-phenylalanyl-tRNA(Phe) + AMP + diphosphate + H(+). This Glaesserella parasuis serovar 5 (strain SH0165) (Haemophilus parasuis) protein is Phenylalanine--tRNA ligase alpha subunit.